The chain runs to 329 residues: Malate dehydrogenase (329 aa).

G12–G18 provides a ligand contact to NAD(+). 2 residues coordinate substrate: R95 and R101. Residues N108, Q115, and V132–N134 each bind NAD(+). Positions 134 and 165 each coordinate substrate. Catalysis depends on H190, which acts as the Proton acceptor.

It belongs to the LDH/MDH superfamily. MDH type 2 family.

It catalyses the reaction (S)-malate + NAD(+) = oxaloacetate + NADH + H(+). Functionally, catalyzes the reversible oxidation of malate to oxaloacetate. The polypeptide is Malate dehydrogenase (Ralstonia nicotianae (strain ATCC BAA-1114 / GMI1000) (Ralstonia solanacearum)).